A 297-amino-acid chain; its full sequence is Light-independent protochlorophyllide reductase iron-sulfur ATP-binding protein (297 aa).

ATP contacts are provided by residues 41-46 (GIGKST) and K70. Position 45 (S45) interacts with Mg(2+). The [4Fe-4S] cluster site is built by C126 and C160. ATP-binding positions include 211 to 212 (NR) and 235 to 237 (PDL).

Belongs to the NifH/BchL/ChlL family. Homodimer. Protochlorophyllide reductase is composed of three subunits; BchL, BchN and BchB. It depends on [4Fe-4S] cluster as a cofactor.

It carries out the reaction chlorophyllide a + oxidized 2[4Fe-4S]-[ferredoxin] + 2 ADP + 2 phosphate = protochlorophyllide a + reduced 2[4Fe-4S]-[ferredoxin] + 2 ATP + 2 H2O. It participates in porphyrin-containing compound metabolism; bacteriochlorophyll biosynthesis (light-independent). Its function is as follows. Component of the dark-operative protochlorophyllide reductase (DPOR) that uses Mg-ATP and reduced ferredoxin to reduce ring D of protochlorophyllide (Pchlide) to form chlorophyllide a (Chlide). This reaction is light-independent. The L component serves as a unique electron donor to the NB-component of the complex, and binds Mg-ATP. This Methylorubrum populi (strain ATCC BAA-705 / NCIMB 13946 / BJ001) (Methylobacterium populi) protein is Light-independent protochlorophyllide reductase iron-sulfur ATP-binding protein.